We begin with the raw amino-acid sequence, 242 residues long: Basic agglutinin (242 aa).

N-linked (GlcNAc...) asparagine glycosylation is found at Asn45 and Asn220.

It belongs to the leguminous lectin family.

Functionally, lectin. The polypeptide is Basic agglutinin (WBAI) (Psophocarpus tetragonolobus (Winged bean)).